The sequence spans 740 residues: Ethylene receptor 1 (740 aa).

Helical transmembrane passes span 23 to 43 (ISDF…IYFV), 53 to 73 (WVLV…LINL), and 95 to 115 (AAVS…LLSV). Cys-65 and His-69 together coordinate Cu cation. The GAF domain maps to 158 to 307 (DRHTILKTTL…VVADQVAVAL (150 aa)). Positions 350-587 (VMNHEMRTPM…TVTFVVKLGI (238 aa)) constitute a Histidine kinase domain. Phosphohistidine; by autocatalysis is present on His-353. A Response regulatory domain is found at 615–732 (KVLLMDENGI…KMRNVLSKLL (118 aa)). Residue Asp-663 is modified to 4-aspartylphosphate.

This sequence belongs to the ethylene receptor family. As to quaternary structure, homodimer; disulfide-linked. It depends on Cu cation as a cofactor. In terms of processing, activation probably requires a transfer of a phosphate group between a His in the transmitter domain and an Asp of the receiver domain.

It localises to the endoplasmic reticulum membrane. The enzyme catalyses ATP + protein L-histidine = ADP + protein N-phospho-L-histidine.. In terms of biological role, may act early in the ethylene signal transduction pathway, possibly as an ethylene receptor, or as a regulator of the pathway. This is Ethylene receptor 1 (ETR1) from Pelargonium hortorum (Common geranium).